Here is a 464-residue protein sequence, read N- to C-terminus: Cysteine--tRNA ligase (464 aa).

Residue Cys29 participates in Zn(2+) binding. The 'HIGH' region motif lies at 31 to 41; the sequence is ATVQGDPHIGH. Residues Cys207, His232, and Glu236 each coordinate Zn(2+). Positions 263–267 match the 'KMSKS' region motif; the sequence is KMSKS. Lys266 contacts ATP.

This sequence belongs to the class-I aminoacyl-tRNA synthetase family. In terms of assembly, monomer. It depends on Zn(2+) as a cofactor.

Its subcellular location is the cytoplasm. The catalysed reaction is tRNA(Cys) + L-cysteine + ATP = L-cysteinyl-tRNA(Cys) + AMP + diphosphate. This is Cysteine--tRNA ligase from Rhodococcus jostii (strain RHA1).